The primary structure comprises 258 residues: Small ribosomal subunit protein mS23 (258 aa).

It belongs to the mitochondrion-specific ribosomal protein mS23 family. As to quaternary structure, component of the mitochondrial small ribosomal subunit.

It is found in the mitochondrion. This is Small ribosomal subunit protein mS23 from Aspergillus fumigatus (strain CBS 144.89 / FGSC A1163 / CEA10) (Neosartorya fumigata).